We begin with the raw amino-acid sequence, 83 residues long: RNA-binding protein Hfq (83 aa).

In terms of domain architecture, Sm spans 10–69 (DPFLNALRREHVPVSIYLVNGIKLQGQIESFDQYVVLLRNTVTQMVYKHAISTIVPGRAV).

Belongs to the Hfq family. In terms of assembly, homohexamer.

Its function is as follows. RNA chaperone that binds small regulatory RNA (sRNAs) and mRNAs to facilitate mRNA translational regulation in response to envelope stress, environmental stress and changes in metabolite concentrations. Also binds with high specificity to tRNAs. This Delftia acidovorans (strain DSM 14801 / SPH-1) protein is RNA-binding protein Hfq.